The following is a 141-amino-acid chain: NADH-quinone oxidoreductase subunit A (141 aa).

Helical transmembrane passes span 24–44 (LLAL…LLLA), 77–97 (VPFY…AFIA), and 106–126 (LGWA…VALI).

Belongs to the complex I subunit 3 family. In terms of assembly, NDH-1 is composed of 14 different subunits. Subunits NuoA, H, J, K, L, M, N constitute the membrane sector of the complex.

Its subcellular location is the cell inner membrane. The catalysed reaction is a quinone + NADH + 5 H(+)(in) = a quinol + NAD(+) + 4 H(+)(out). In terms of biological role, NDH-1 shuttles electrons from NADH, via FMN and iron-sulfur (Fe-S) centers, to quinones in the respiratory chain. The immediate electron acceptor for the enzyme in this species is believed to be ubiquinone. Couples the redox reaction to proton translocation (for every two electrons transferred, four hydrogen ions are translocated across the cytoplasmic membrane), and thus conserves the redox energy in a proton gradient. In Syntrophotalea carbinolica (strain DSM 2380 / NBRC 103641 / GraBd1) (Pelobacter carbinolicus), this protein is NADH-quinone oxidoreductase subunit A.